Consider the following 379-residue polypeptide: Anhydro-N-acetylmuramic acid kinase (379 aa).

Residue glycine 9–aspartate 16 participates in ATP binding.

Belongs to the anhydro-N-acetylmuramic acid kinase family.

The enzyme catalyses 1,6-anhydro-N-acetyl-beta-muramate + ATP + H2O = N-acetyl-D-muramate 6-phosphate + ADP + H(+). Its pathway is amino-sugar metabolism; 1,6-anhydro-N-acetylmuramate degradation. The protein operates within cell wall biogenesis; peptidoglycan recycling. In terms of biological role, catalyzes the specific phosphorylation of 1,6-anhydro-N-acetylmuramic acid (anhMurNAc) with the simultaneous cleavage of the 1,6-anhydro ring, generating MurNAc-6-P. Is required for the utilization of anhMurNAc either imported from the medium or derived from its own cell wall murein, and thus plays a role in cell wall recycling. The protein is Anhydro-N-acetylmuramic acid kinase of Parasynechococcus marenigrum (strain WH8102).